Consider the following 145-residue polypeptide: uncharacterized protein (145 aa).

The next 2 membrane-spanning stretches (helical) occupy residues 20 to 40 and 116 to 136; these read LIGPFLFAIIYWSIFIEGMFF and MIMLLYAEIIIYSSFSCVLSA.

It is found in the membrane. This is an uncharacterized protein from Saccharomyces cerevisiae (strain ATCC 204508 / S288c) (Baker's yeast).